A 20-amino-acid polypeptide reads, in one-letter code: Cytochrome c oxidase subunit 8B, mitochondrial (20 aa).

Residues 1 to 20 (LSGKPAKXHLSVGEQAIAMT) are disordered.

This sequence belongs to the cytochrome c oxidase VIII family. In terms of assembly, component of the cytochrome c oxidase (complex IV, CIV), a multisubunit enzyme composed of 14 subunits. The complex is composed of a catalytic core of 3 subunits MT-CO1, MT-CO2 and MT-CO3, encoded in the mitochondrial DNA, and 11 supernumerary subunits COX4I, COX5A, COX5B, COX6A, COX6B, COX6C, COX7A, COX7B, COX7C, COX8 and NDUFA4, which are encoded in the nuclear genome. The complex exists as a monomer or a dimer and forms supercomplexes (SCs) in the inner mitochondrial membrane with NADH-ubiquinone oxidoreductase (complex I, CI) and ubiquinol-cytochrome c oxidoreductase (cytochrome b-c1 complex, complex III, CIII), resulting in different assemblies (supercomplex SCI(1)III(2)IV(1) and megacomplex MCI(2)III(2)IV(2)).

The protein resides in the mitochondrion inner membrane. The protein operates within energy metabolism; oxidative phosphorylation. In terms of biological role, component of the cytochrome c oxidase, the last enzyme in the mitochondrial electron transport chain which drives oxidative phosphorylation. The respiratory chain contains 3 multisubunit complexes succinate dehydrogenase (complex II, CII), ubiquinol-cytochrome c oxidoreductase (cytochrome b-c1 complex, complex III, CIII) and cytochrome c oxidase (complex IV, CIV), that cooperate to transfer electrons derived from NADH and succinate to molecular oxygen, creating an electrochemical gradient over the inner membrane that drives transmembrane transport and the ATP synthase. Cytochrome c oxidase is the component of the respiratory chain that catalyzes the reduction of oxygen to water. Electrons originating from reduced cytochrome c in the intermembrane space (IMS) are transferred via the dinuclear copper A center (CU(A)) of subunit 2 and heme A of subunit 1 to the active site in subunit 1, a binuclear center (BNC) formed by heme A3 and copper B (CU(B)). The BNC reduces molecular oxygen to 2 water molecules using 4 electrons from cytochrome c in the IMS and 4 protons from the mitochondrial matrix. The protein is Cytochrome c oxidase subunit 8B, mitochondrial of Oncorhynchus mykiss (Rainbow trout).